A 423-amino-acid chain; its full sequence is Tyrosine--tRNA ligase (423 aa).

Position 35 (Tyr35) interacts with L-tyrosine. The short motif at 40-49 (PTAPSLHAGH) is the 'HIGH' region element. L-tyrosine contacts are provided by Tyr170 and Gln174. The 'KMSKS' region signature appears at 230 to 234 (KFGKS). Lys233 contributes to the ATP binding site. An S4 RNA-binding domain is found at 355–412 (DLITDLLVATGLSASKGAARRTIAEGGVSVNNVKIDSDEWTPQASDFLHGRWLVLRRG).

Belongs to the class-I aminoacyl-tRNA synthetase family. TyrS type 1 subfamily. In terms of assembly, homodimer.

The protein localises to the cytoplasm. The catalysed reaction is tRNA(Tyr) + L-tyrosine + ATP = L-tyrosyl-tRNA(Tyr) + AMP + diphosphate + H(+). In terms of biological role, catalyzes the attachment of tyrosine to tRNA(Tyr) in a two-step reaction: tyrosine is first activated by ATP to form Tyr-AMP and then transferred to the acceptor end of tRNA(Tyr). The polypeptide is Tyrosine--tRNA ligase (Mycobacterium sp. (strain JLS)).